A 104-amino-acid polypeptide reads, in one-letter code: N(4)-acetylcytidine amidohydrolase (104 aa).

Residues 7–93 form the ASCH domain; it reads MTFFSRFEAD…EVIQEIYPGI (87 aa). Lysine 22 acts as the Proton acceptor in catalysis. Threonine 25 acts as the Nucleophile in catalysis. Catalysis depends on glutamate 75, which acts as the Proton donor.

It belongs to the N(4)-acetylcytidine amidohydrolase family.

It catalyses the reaction N(4)-acetylcytidine + H2O = cytidine + acetate + H(+). The catalysed reaction is N(4)-acetyl-2'-deoxycytidine + H2O = 2'-deoxycytidine + acetate + H(+). The enzyme catalyses N(4)-acetylcytosine + H2O = cytosine + acetate + H(+). Functionally, catalyzes the hydrolysis of N(4)-acetylcytidine (ac4C). The protein is N(4)-acetylcytidine amidohydrolase of Vibrio vulnificus (strain CMCP6).